A 233-amino-acid polypeptide reads, in one-letter code: 3-dehydroquinate dehydratase (233 aa).

3-dehydroquinate-binding positions include 34-36 (ELR) and R64. The Proton donor/acceptor role is filled by H118. The active-site Schiff-base intermediate with substrate is the K145. 3-dehydroquinate contacts are provided by R185, S205, and Q209.

It belongs to the type-I 3-dehydroquinase family. Homodimer.

It catalyses the reaction 3-dehydroquinate = 3-dehydroshikimate + H2O. It functions in the pathway metabolic intermediate biosynthesis; chorismate biosynthesis; chorismate from D-erythrose 4-phosphate and phosphoenolpyruvate: step 3/7. Its function is as follows. Involved in the third step of the chorismate pathway, which leads to the biosynthesis of aromatic amino acids. Catalyzes the cis-dehydration of 3-dehydroquinate (DHQ) and introduces the first double bond of the aromatic ring to yield 3-dehydroshikimate. This is 3-dehydroquinate dehydratase from Coxiella burnetii (strain CbuG_Q212) (Coxiella burnetii (strain Q212)).